The sequence spans 300 residues: uncharacterized protein (300 aa).

Residue H274 is the Proton acceptor of the active site.

It belongs to the AB hydrolase superfamily. Monomer.

The enzyme catalyses a carboxylic ester + H2O = an alcohol + a carboxylate + H(+). This is an uncharacterized protein from Bacillus subtilis (strain 168).